The primary structure comprises 1137 residues: Bone sialoprotein-binding protein (1137 aa).

The signal sequence occupies residues 1 to 52; sequence MINRDNKKAITKKGMISNRLNKFSIRKYTVGTASILVGTTLIFGLGNQEAKA. Residues 53–601 are ligand binding A region; the sequence is AENTSTENAK…GDGTVKPEEK (549 aa). Disordered regions lie at residues 54–249 and 675–697; these read ENTS…TAPT and LPTK…VTVK. A compositionally biased stretch (basic and acidic residues) spans 61-75; that stretch reads AKQDEASASDNKEVV. Residues 77-89 show a composition bias toward polar residues; that stretch reads ETENNSTQKNDLT. Positions 92–106 are enriched in basic and acidic residues; the sequence is IKKETNTDSHQEAKE. Over residues 109–126 the composition is skewed to low complexity; the sequence is TTSSTQQQQNNATTSTET. Basic and acidic residues predominate over residues 130 to 145; sequence NIEKENVKPSTDKTAT. Over residues 158–207 the composition is skewed to polar residues; it reads PNNTNNDVTTKPSTSEIQTTPTTPQESTNIENSQPQPTPSKVDNQVTDAT. The span at 216-241 shows a compositional bias: basic and acidic residues; the sequence is SKEELKNNPEKLKELVRNDSNTDRST. CNA-B domains lie at 602–714, 715–824, and 825–935; these read LYKI…YKEP, KYNL…YKTP, and KYSL…EEDT. Positions 896–1112 are disordered; the sequence is TQTGTNTTED…TGSENNGSNN (217 aa). Acidic residues-rich tracts occupy residues 903-913 and 930-1076; these read TEDDKDADGGE and YFEE…DSDS. Positions 1100–1104 match the LPXTG sorting signal motif; that stretch reads LPETG. Thr-1103 carries the post-translational modification Pentaglycyl murein peptidoglycan amidated threonine. The propeptide at 1104 to 1137 is removed by sortase; it reads GSENNGSNNATLFGGLFAALGSLLLFGRRKKQNK.

It belongs to the serine-aspartate repeat-containing protein (SDr) family.

It localises to the secreted. The protein resides in the cell wall. Its function is as follows. Specifically interacts with bone sialoprotein (BSP), a glycoprotein of bone and dentin extracellular matrix. Could contribute to staphylococcal osteomyelitis and arthritis. In Staphylococcus aureus (strain MRSA252), this protein is Bone sialoprotein-binding protein (bbp).